Consider the following 272-residue polypeptide: Probable proteasome subunit beta type-5 (272 aa).

A propeptide spans M1–G61 (removed in mature form). The active-site Nucleophile is the T62.

This sequence belongs to the peptidase T1B family. The 26S proteasome consists of a 20S proteasome core and two 19S regulatory subunits. The 20S proteasome core is composed of 28 subunits that are arranged in four stacked rings, resulting in a barrel-shaped structure. The two end rings are each formed by seven alpha subunits, and the two central rings are each formed by seven beta subunits. The catalytic chamber with the active sites is on the inside of the barrel.

The protein resides in the cytoplasm. It is found in the nucleus. It catalyses the reaction Cleavage of peptide bonds with very broad specificity.. In terms of biological role, the proteasome is a multicatalytic proteinase complex which is characterized by its ability to cleave peptides with Arg, Phe, Tyr, Leu, and Glu adjacent to the leaving group at neutral or slightly basic pH. The proteasome has an ATP-dependent proteolytic activity. The sequence is that of Probable proteasome subunit beta type-5 (pts1) from Schizosaccharomyces pombe (strain 972 / ATCC 24843) (Fission yeast).